A 432-amino-acid chain; its full sequence is Trigger factor (432 aa).

The 86-residue stretch at 161 to 246 (EDRVTIDFTG…LKKVEERELP (86 aa)) folds into the PPIase FKBP-type domain.

The protein belongs to the FKBP-type PPIase family. Tig subfamily.

Its subcellular location is the cytoplasm. The catalysed reaction is [protein]-peptidylproline (omega=180) = [protein]-peptidylproline (omega=0). In terms of biological role, involved in protein export. Acts as a chaperone by maintaining the newly synthesized protein in an open conformation. Functions as a peptidyl-prolyl cis-trans isomerase. The sequence is that of Trigger factor from Klebsiella pneumoniae subsp. pneumoniae (strain ATCC 700721 / MGH 78578).